Reading from the N-terminus, the 201-residue chain is Pyridoxal 5'-phosphate synthase subunit PdxT (201 aa).

L-glutamine is bound at residue 49 to 51 (GES). Cysteine 81 serves as the catalytic Nucleophile. L-glutamine-binding positions include arginine 110 and 139 to 140 (IR). Residues histidine 180 and glutamate 182 each act as charge relay system in the active site.

It belongs to the glutaminase PdxT/SNO family. As to quaternary structure, in the presence of PdxS, forms a dodecamer of heterodimers. Only shows activity in the heterodimer.

It catalyses the reaction aldehydo-D-ribose 5-phosphate + D-glyceraldehyde 3-phosphate + L-glutamine = pyridoxal 5'-phosphate + L-glutamate + phosphate + 3 H2O + H(+). It carries out the reaction L-glutamine + H2O = L-glutamate + NH4(+). The protein operates within cofactor biosynthesis; pyridoxal 5'-phosphate biosynthesis. Functionally, catalyzes the hydrolysis of glutamine to glutamate and ammonia as part of the biosynthesis of pyridoxal 5'-phosphate. The resulting ammonia molecule is channeled to the active site of PdxS. This chain is Pyridoxal 5'-phosphate synthase subunit PdxT, found in Salinispora tropica (strain ATCC BAA-916 / DSM 44818 / JCM 13857 / NBRC 105044 / CNB-440).